Consider the following 92-residue polypeptide: Probable acyl carrier protein (92 aa).

The 82-residue stretch at glutamine 11–valine 92 folds into the Carrier domain. The residue at position 49 (serine 49) is an O-(pantetheine 4'-phosphoryl)serine.

In terms of processing, 4'-phosphopantetheine is transferred from CoA to a specific serine of the apo-ACP-like protein.

Involved in developmentally regulated synthesis of a compound biosynthetically related to polyketide antibiotics which is essential for spore color in Streptomyces halstedii. This chain is Probable acyl carrier protein (sch3), found in Streptomyces halstedii.